A 439-amino-acid chain; its full sequence is Enolase 2 (439 aa).

Positions 160 and 169 each coordinate substrate. The Proton donor role is filled by Glu-212. Mg(2+)-binding residues include Asp-247, Glu-296, and Asp-323. 2 residues coordinate substrate: Glu-296 and Asp-323. Lys-348 (proton acceptor) is an active-site residue. Substrate contacts are provided by residues 375–378 and Lys-399; that span reads SHRS.

The protein belongs to the enolase family. As to quaternary structure, homodimer. Requires Mg(2+) as cofactor.

The protein localises to the cytoplasm. The catalysed reaction is (2R)-2-phosphoglycerate = phosphoenolpyruvate + H2O. It participates in carbohydrate degradation; glycolysis; pyruvate from D-glyceraldehyde 3-phosphate: step 4/5. This chain is Enolase 2 (ENO2), found in Debaryomyces hansenii (strain ATCC 36239 / CBS 767 / BCRC 21394 / JCM 1990 / NBRC 0083 / IGC 2968) (Yeast).